The sequence spans 114 residues: UPF0342 protein LVIS_1488 (114 aa).

Belongs to the UPF0342 family.

The sequence is that of UPF0342 protein LVIS_1488 from Levilactobacillus brevis (strain ATCC 367 / BCRC 12310 / CIP 105137 / JCM 1170 / LMG 11437 / NCIMB 947 / NCTC 947) (Lactobacillus brevis).